The primary structure comprises 530 residues: Chaperonin GroEL (530 aa).

Residues 30–33 (TLGP), K51, 87–91 (DGTTT), G415, and D495 contribute to the ATP site.

The protein belongs to the chaperonin (HSP60) family. In terms of assembly, forms a cylinder of 14 subunits composed of two heptameric rings stacked back-to-back. Interacts with the co-chaperonin GroES.

It is found in the cytoplasm. It catalyses the reaction ATP + H2O + a folded polypeptide = ADP + phosphate + an unfolded polypeptide.. Its function is as follows. Together with its co-chaperonin GroES, plays an essential role in assisting protein folding. The GroEL-GroES system forms a nano-cage that allows encapsulation of the non-native substrate proteins and provides a physical environment optimized to promote and accelerate protein folding. This Carsonella ruddii (strain PV) protein is Chaperonin GroEL.